We begin with the raw amino-acid sequence, 138 residues long: Nucleoside diphosphate kinase (138 aa).

Residues Lys11, Phe59, Arg87, Thr93, Arg104, and Asn114 each contribute to the ATP site. His117 (pros-phosphohistidine intermediate) is an active-site residue.

Belongs to the NDK family. Mg(2+) serves as cofactor.

The protein resides in the cytoplasm. The catalysed reaction is a 2'-deoxyribonucleoside 5'-diphosphate + ATP = a 2'-deoxyribonucleoside 5'-triphosphate + ADP. The enzyme catalyses a ribonucleoside 5'-diphosphate + ATP = a ribonucleoside 5'-triphosphate + ADP. In terms of biological role, major role in the synthesis of nucleoside triphosphates other than ATP. The ATP gamma phosphate is transferred to the NDP beta phosphate via a ping-pong mechanism, using a phosphorylated active-site intermediate. This chain is Nucleoside diphosphate kinase, found in Saccharolobus islandicus (strain Y.N.15.51 / Yellowstone #2) (Sulfolobus islandicus).